The following is a 236-amino-acid chain: Urease accessory protein UreG 2 (236 aa).

The disordered stretch occupies residues 1-40 (MEASVHIGNSVPHAHLHSAAPARPADPVRPDGSRRALRIG). Position 43 to 50 (43 to 50 (GPVGSGKT)) interacts with GTP.

It belongs to the SIMIBI class G3E GTPase family. UreG subfamily. Homodimer. UreD, UreF and UreG form a complex that acts as a GTP-hydrolysis-dependent molecular chaperone, activating the urease apoprotein by helping to assemble the nickel containing metallocenter of UreC. The UreE protein probably delivers the nickel.

Its subcellular location is the cytoplasm. Functionally, facilitates the functional incorporation of the urease nickel metallocenter. This process requires GTP hydrolysis, probably effectuated by UreG. The sequence is that of Urease accessory protein UreG 2 from Saccharopolyspora erythraea (strain ATCC 11635 / DSM 40517 / JCM 4748 / NBRC 13426 / NCIMB 8594 / NRRL 2338).